The primary structure comprises 1793 residues: Brefeldin A-inhibited guanine nucleotide-exchange protein 2 (1793 aa).

Ala2 carries the post-translational modification N-acetylalanine. Disordered stretches follow at residues 45 to 71 (NSLQ…PGPL), 266 to 299 (TMSG…LLDS), and 579 to 606 (GSPQ…GGTS). Over residues 55–66 (SSAATDSESESS) the composition is skewed to low complexity. Positions 270–281 (SGSGSGSGGQDG) are enriched in gly residues. Polar residues-rich tracts occupy residues 284–294 (GTTTVETTNPT) and 594–605 (GSDTYSESSGGT). At Ser595 the chain carries Phosphoserine. In terms of domain architecture, SEC7 spans 610-797 (AIEQRRAYKL…RSLYERITKH (188 aa)). Glu712 is a catalytic residue. Over residues 1311–1327 (NKYKGTSGKIPQSSLHS) the composition is skewed to polar residues. Residues 1311–1333 (NKYKGTSGKIPQSSLHSGKSGKQ) are disordered.

In terms of assembly, homodimer.

Its subcellular location is the cytoplasm. The protein localises to the cytosol. It localises to the membrane. Inhibited by brefeldin A. Functionally, activates the ARF proteins by exchanging bound GDP for free GTP. Plays a role in vesicular protein sorting. This Arabidopsis thaliana (Mouse-ear cress) protein is Brefeldin A-inhibited guanine nucleotide-exchange protein 2 (BIG2).